The primary structure comprises 583 residues: ATP-dependent lipid A-core flippase (583 aa).

The next 7 helical transmembrane spans lie at 18–38 (LWPIINPFKIGLIIASITLII), 65–85 (IFMWMPLVLMGLMIMRGMSGF), 105–127 (LLFNHIMNMPVSFFIEQSTATLM), 143–163 (GALITIIREGASVVGLCIMMF), 167–187 (WQLSLVLILIMPIISIIIKLV), 252–272 (VFEPLIQFVASLALACVLYIA), and 277–297 (VIEMLSAGTITVIFSSMIALM). Residues 30–312 (IIASITLIIN…LTNVSAQFQR (283 aa)) enclose the ABC transmembrane type-1 domain. The region spanning 344–580 (IIFDNVTFFY…KGVYSQLYKF (237 aa)) is the ABC transporter domain. 378 to 385 (GRSGSGKS) contributes to the ATP binding site.

This sequence belongs to the ABC transporter superfamily. Lipid exporter (TC 3.A.1.106) family. In terms of assembly, homodimer.

The protein resides in the cell inner membrane. It carries out the reaction ATP + H2O + lipid A-core oligosaccharideSide 1 = ADP + phosphate + lipid A-core oligosaccharideSide 2.. Its function is as follows. Involved in lipopolysaccharide (LPS) biosynthesis. Translocates lipid A-core from the inner to the outer leaflet of the inner membrane. Transmembrane domains (TMD) form a pore in the inner membrane and the ATP-binding domain (NBD) is responsible for energy generation. The protein is ATP-dependent lipid A-core flippase of Blochmanniella floridana.